The primary structure comprises 91 residues: Small ribosomal subunit protein bS20 (91 aa).

2 disordered regions span residues 1 to 26 (MALRHKSAQKRHRQSLKRRMLNRSRK) and 67 to 91 (HKNAAARKKSRLAKAINRVKAAQQS).

The protein belongs to the bacterial ribosomal protein bS20 family.

In terms of biological role, binds directly to 16S ribosomal RNA. In Deinococcus deserti (strain DSM 17065 / CIP 109153 / LMG 22923 / VCD115), this protein is Small ribosomal subunit protein bS20.